We begin with the raw amino-acid sequence, 389 residues long: Na(+)/H(+) antiporter NhaA (389 aa).

The next 11 membrane-spanning stretches (helical) occupy residues isoleucine 24–alanine 44, leucine 56–leucine 76, leucine 94–leucine 114, alanine 122–leucine 142, valine 152–phenylalanine 172, glutamine 176–asparagine 196, phenylalanine 216–isoleucine 236, proline 259–serine 279, leucine 291–valine 311, tryptophan 326–isoleucine 346, and methionine 363–phenylalanine 383.

It belongs to the NhaA Na(+)/H(+) (TC 2.A.33) antiporter family.

Its subcellular location is the cell inner membrane. It catalyses the reaction Na(+)(in) + 2 H(+)(out) = Na(+)(out) + 2 H(+)(in). Functionally, na(+)/H(+) antiporter that extrudes sodium in exchange for external protons. This Dechloromonas aromatica (strain RCB) protein is Na(+)/H(+) antiporter NhaA.